A 208-amino-acid chain; its full sequence is Protein-L-isoaspartate O-methyltransferase (208 aa).

Ser-59 is a catalytic residue.

Belongs to the methyltransferase superfamily. L-isoaspartyl/D-aspartyl protein methyltransferase family.

The protein localises to the cytoplasm. It carries out the reaction [protein]-L-isoaspartate + S-adenosyl-L-methionine = [protein]-L-isoaspartate alpha-methyl ester + S-adenosyl-L-homocysteine. Catalyzes the methyl esterification of L-isoaspartyl residues in peptides and proteins that result from spontaneous decomposition of normal L-aspartyl and L-asparaginyl residues. It plays a role in the repair and/or degradation of damaged proteins. This Yersinia pseudotuberculosis serotype O:1b (strain IP 31758) protein is Protein-L-isoaspartate O-methyltransferase.